A 261-amino-acid chain; its full sequence is tRNA pseudouridine synthase A (261 aa).

D51 serves as the catalytic Nucleophile. Y109 is a binding site for substrate.

The protein belongs to the tRNA pseudouridine synthase TruA family. As to quaternary structure, homodimer.

The catalysed reaction is uridine(38/39/40) in tRNA = pseudouridine(38/39/40) in tRNA. Functionally, formation of pseudouridine at positions 38, 39 and 40 in the anticodon stem and loop of transfer RNAs. In Idiomarina loihiensis (strain ATCC BAA-735 / DSM 15497 / L2-TR), this protein is tRNA pseudouridine synthase A.